Consider the following 369-residue polypeptide: UDP-3-O-acylglucosamine N-acyltransferase (369 aa).

His263 (proton acceptor) is an active-site residue.

This sequence belongs to the transferase hexapeptide repeat family. LpxD subfamily. As to quaternary structure, homotrimer.

The enzyme catalyses a UDP-3-O-[(3R)-3-hydroxyacyl]-alpha-D-glucosamine + a (3R)-hydroxyacyl-[ACP] = a UDP-2-N,3-O-bis[(3R)-3-hydroxyacyl]-alpha-D-glucosamine + holo-[ACP] + H(+). It participates in bacterial outer membrane biogenesis; LPS lipid A biosynthesis. Its function is as follows. Catalyzes the N-acylation of UDP-3-O-acylglucosamine using 3-hydroxyacyl-ACP as the acyl donor. Is involved in the biosynthesis of lipid A, a phosphorylated glycolipid that anchors the lipopolysaccharide to the outer membrane of the cell. The chain is UDP-3-O-acylglucosamine N-acyltransferase from Burkholderia ambifaria (strain MC40-6).